The primary structure comprises 132 residues: Antiholin (132 aa).

At 1–16 (MMNMIEWTKHVLESDD) the chain is on the periplasmic side. Cytoplasmic segments lie at residues 1-61 (MMNM…ILIK) and 39-58 (VIARINPKEKFSSFKMKTGI). The chain crosses the membrane as a helical span at residues 17 to 38 (TKLIYWLTLLMVCMIVDTILGI). The chain crosses the membrane as a helical span at residues 62-80 (VSEMIIALLAVPFALPFPA). Topologically, residues 81–85 (GLPLL) are periplasmic. The helical transmembrane segment at 86 to 107 (YTVYTALCVSEMYSIFGHLRVV) threads the bilayer. Over 108–132 (DDKSNFLSIIEGFFKQTYRKDKGDK) the chain is Cytoplasmic.

Belongs to the bacteriophage holin family. phi29likevirus holin subfamily. Homomultimer. Interacts with isoform Antiholin; this interaction blocks the holin homomultimerization and delays host cell lysis.

The protein resides in the host cell inner membrane. Functionally, accumulates harmlessly in the cytoplasmic membrane until it reaches a critical concentration that triggers the formation of micron-scale pores (holes) causing host cell membrane disruption and endolysin escape into the periplasmic space. Determines the precise timing of host cell lysis. Participates with the endolysin and spanin proteins in the sequential events which lead to the programmed host cell lysis releasing the mature viral particles from the host cell. Counteracts the aggregation of the holin molecules and thus of pore formation. The polypeptide is Antiholin (14) (Bacillus phage B103 (Bacteriophage B103)).